Reading from the N-terminus, the 124-residue chain is Large ribosomal subunit protein bL12 (124 aa).

Residues 102–116 show a composition bias toward basic and acidic residues; the sequence is MSKEDAEAAKTKLEE. The segment at 102–124 is disordered; sequence MSKEDAEAAKTKLEEAGASVELK.

This sequence belongs to the bacterial ribosomal protein bL12 family. Homodimer. Part of the ribosomal stalk of the 50S ribosomal subunit. Forms a multimeric L10(L12)X complex, where L10 forms an elongated spine to which 2 to 4 L12 dimers bind in a sequential fashion. Binds GTP-bound translation factors.

Forms part of the ribosomal stalk which helps the ribosome interact with GTP-bound translation factors. Is thus essential for accurate translation. This is Large ribosomal subunit protein bL12 from Chromohalobacter salexigens (strain ATCC BAA-138 / DSM 3043 / CIP 106854 / NCIMB 13768 / 1H11).